A 932-amino-acid polypeptide reads, in one-letter code: Lon protease homolog 2, peroxisomal (932 aa).

The 249-residue stretch at 11 to 259 (LALVPLPKGS…RVVELLARQV (249 aa)) folds into the Lon N-terminal domain. The tract at residues 304–340 (TGLTPPGAAGGRNNEDEKETNEVDELQKRLQEAELSP) is disordered. Residues 328–340 (ELQKRLQEAELSP) are compositionally biased toward basic and acidic residues. An ATP-binding site is contributed by 486–493 (GPPGTGKT). The Lon proteolytic domain occupies 729 to 916 (HGRPGVVTGL…WEAIRQVWPG (188 aa)). Active-site residues include serine 822 and lysine 865. The Microbody targeting signal motif lies at 930 to 932 (SRL).

Belongs to the peptidase S16 family.

Its subcellular location is the peroxisome matrix. It catalyses the reaction Hydrolysis of proteins in presence of ATP.. In terms of biological role, ATP-dependent serine protease that mediates the selective degradation of misfolded and unassembled polypeptides in the peroxisomal matrix. Necessary for type 2 peroxisome targeting signal (PTS2)-containing protein processing and facilitates peroxisome matrix protein import. This Aspergillus fumigatus (strain ATCC MYA-4609 / CBS 101355 / FGSC A1100 / Af293) (Neosartorya fumigata) protein is Lon protease homolog 2, peroxisomal.